The primary structure comprises 283 residues: Pantothenate synthetase (283 aa).

Position 30-37 (30-37 (MGYFHDGH)) interacts with ATP. His-37 serves as the catalytic Proton donor. Position 61 (Gln-61) interacts with (R)-pantoate. Beta-alanine is bound at residue Gln-61. 147 to 150 (GSKD) contributes to the ATP binding site. Gln-153 serves as a coordination point for (R)-pantoate. Residues Val-176 and 184–187 (MSSR) contribute to the ATP site.

The protein belongs to the pantothenate synthetase family. As to quaternary structure, homodimer.

It is found in the cytoplasm. It catalyses the reaction (R)-pantoate + beta-alanine + ATP = (R)-pantothenate + AMP + diphosphate + H(+). Its pathway is cofactor biosynthesis; (R)-pantothenate biosynthesis; (R)-pantothenate from (R)-pantoate and beta-alanine: step 1/1. Its function is as follows. Catalyzes the condensation of pantoate with beta-alanine in an ATP-dependent reaction via a pantoyl-adenylate intermediate. The sequence is that of Pantothenate synthetase from Desulforapulum autotrophicum (strain ATCC 43914 / DSM 3382 / VKM B-1955 / HRM2) (Desulfobacterium autotrophicum).